A 173-amino-acid chain; its full sequence is Small ribosomal subunit protein mS25 (173 aa).

Belongs to the mitochondrion-specific ribosomal protein mS25 family. Component of the mitochondrial small ribosomal subunit (mt-SSU). Mature mammalian 55S mitochondrial ribosomes consist of a small (28S) and a large (39S) subunit. The 28S small subunit contains a 12S ribosomal RNA (12S mt-rRNA) and 30 different proteins. The 39S large subunit contains a 16S rRNA (16S mt-rRNA), a copy of mitochondrial valine transfer RNA (mt-tRNA(Val)), which plays an integral structural role, and 52 different proteins.

The protein resides in the mitochondrion. This Homo sapiens (Human) protein is Small ribosomal subunit protein mS25 (MRPS25).